The following is a 158-amino-acid chain: Ankyrin repeat domain-containing protein 37 (158 aa).

ANK repeat units lie at residues 1-25 (MLLL…SVNA), 30-59 (CEQS…DLNQ), and 63-92 (FGEA…QIDL). The Nuclear localization signal signature appears at 129 to 149 (EQPNKDHCVQVLRLKRSFGSE).

Post-translationally, ubiquitinated by the CRL2(FEM1B) complex, leading to its degradation.

It localises to the nucleus. It is found in the cytoplasm. The chain is Ankyrin repeat domain-containing protein 37 (ANKRD37) from Bos taurus (Bovine).